Consider the following 1135-residue polypeptide: MHQMNAKMHFRFVFALLIVSFNHDVLGKNLKYRIYEEQRVGSVIARLSEDVADVLLKLPNPSTVRFRAMQRGNSPLLVVNEDNGEISIGATIDREQLCQKNLNCSIEFDVITLPTEHLQLFHIEVEVLDINDNSPQFSRSLIPIEISESAAVGTRIPLDSAFDPDVGENSLHTYSLSANDFFNIEVRTRTDGAKYAELIVVRELDRELKSSYELQLTASDMGVPQRSGSSILKISISDSNDNSPAFEQQSYIIQLLENSPVGTLLLDLNATDPDEGANGKIVYSFSSHVSPKIMETFKIDSERGHLTLFKQVDYEITKSYEIDVQAQDLGPNSIPAHCKIIIKVVDVNDNKPEININLMSPGKEEISYIFEGDPIDTFVALVRVQDKDSGLNGEIVCKLHGHGHFKLQKTYENNYLILTNATLDREKRSEYSLTVIAEDRGTPSLSTVKHFTVQINDINDNPPHFQRSRYEFVISENNSPGAYITTVTATDPDLGENGQVTYTILESFILGSSITTYVTIDPSNGAIYALRIFDHEEVSQITFVVEARDGGSPKQLVSNTTVVLTIIDENDNVPVVIGPALRNNTAEITIPKGAESGFHVTRIRAIDRDSGVNAELSCAIVAGNEENIFIIDPRSCDIHTNVSMDSVPYTEWELSVIIQDKGNPQLHTKVLLKCMIFEYAESVTSTAMTSVSQASLDVSMIIIISLGAICAVLLVIMVLFATRCNREKKDTRSYNCRVAESTYQHHPKRPSRQIHKGDITLVPTINGTLPIRSHHRSSPSSSPTLERGQMGSRQSHNSHQSLNSLVTISSNHVPENFSLELTHATPAVEQVSQLLSMLHQGQYQPRPSFRGNKYSRSYRYALQDMDKFSLKDSGRGDSEAGDSDYDLGRDSPIDRLLGEGFSDLFLTDGRIPAAMRLCTEECRVLGHSDQCWMPPLPSPSSDYRSNMFIPGEEFPTQPQQQHPHQSLEDDAQPADSGEKKKSFSTFGKDSPNDEDTGDTSTSSLLSEMSSVFQRLLPPSLDTYSECSEVDRSNSLERRKGPLPAKTVGYPQGVAAWAASTHFQNPTTNCGPPLGTHSSVQPSSKWLPAMEEIPENYEEDDFDNVLNHLNDGKHELMDASELVAEINKLLQDVRQS.

The N-terminal stretch at 1–27 (MHQMNAKMHFRFVFALLIVSFNHDVLG) is a signal peptide. Cadherin domains follow at residues 28–137 (KNLK…SPQF), 138–246 (SRSL…SPAF), 247–354 (EQQS…KPEI), 361–465 (PGKE…PPHF), 466–576 (QRSR…VPVV), and 582–688 (RNNT…STAM). The Extracellular portion of the chain corresponds to 28-699 (KNLKYRIYEE…SVSQASLDVS (672 aa)). Asn103 carries an N-linked (GlcNAc...) asparagine glycan. 5 N-linked (GlcNAc...) asparagine glycosylation sites follow: Asn269, Asn420, Asn559, Asn583, and Asn641. A helical transmembrane segment spans residues 700-720 (MIIIISLGAICAVLLVIMVLF). Topologically, residues 721–1135 (ATRCNREKKD…NKLLQDVRQS (415 aa)) are cytoplasmic. 4 disordered regions span residues 769–800 (LPIR…NSHQ), 869–889 (SLKD…DLGR), 942–1003 (DYRS…STSS), and 1023–1046 (YSEC…PAKT). A compositionally biased stretch (polar residues) spans 791–800 (GSRQSHNSHQ). Basic and acidic residues predominate over residues 869 to 878 (SLKDSGRGDS). The tract at residues 893–1135 (IDRLLGEGFS…NKLLQDVRQS (243 aa)) is interaction with DAB1. Basic and acidic residues predominate over residues 1028–1039 (EVDRSNSLERRK).

Interacts with DAB1. In terms of tissue distribution, expressed in all tissues, with highest expression in lung and ovary.

It is found in the cell membrane. In terms of biological role, potential calcium-dependent cell-adhesion protein. The sequence is that of Protocadherin-18 (PCDH18) from Homo sapiens (Human).